The following is a 32-amino-acid chain: Fimbrin sef21 (32 aa).

The protein resides in the fimbrium. This Salmonella enteritidis protein is Fimbrin sef21.